Here is a 152-residue protein sequence, read N- to C-terminus: Large ribosomal subunit protein bL9 (152 aa).

Belongs to the bacterial ribosomal protein bL9 family.

Functionally, binds to the 23S rRNA. This is Large ribosomal subunit protein bL9 from Pelagibacter ubique (strain HTCC1062).